The chain runs to 662 residues: MAEAPQVVEIDPDFEPLPRPRSCTWPLPRPEFSQSNSATSSPAPSGGAAANPDAAAGLPSASAAAVNADFMSNLSLLEESEDFPQAPGSVAAAAAAAAAVAAAAAAAATGGLCGDFQGPEAGCLHPAPPQQPPPPGPLSQHPPVPPAAAGSLAGQPRKSSSSRRNAWGNLSYADLITKAIESSAEKRLTLSQIYEWMVKSVPYFKDKGDSNSSAGWKNSIRHNLSLHSKFIRVQNEGTGKSSWWMLNPEGGKSGKSPRRRAASMDNNSKFAKSRGRAAKKKASLQSGQEGAGDSPGSQFSKWPASPGSHSNDDFDNWSTFRPRTSSNASTISGRLSPIMTEQDDLGNGDVHSMVYPPSAAKMASTLPSLSEISNPENMENLLDNLNLLSSPTSLTVSTQSSPGTIMQQTPCYSFAPPNTSLNSPSPNYQKYTYGQSSMSPLPQMPMQTLQDSKSSYGGMAQYNCAAGLLKELLTSDSPPHNDIMTPVDPGVAQPNSRVLGQNVLMGPSSVMPAYGGQASHNKMMNPSSHSHPGHAQSTSAVNGRALPHAVNTMPHASGMNRLTQEKTALQVPLPHPMQMNALGGYSPASTCNGYGRMGLLHQEKLPSDLDGMFIERLDCDMESIIRNDLMDGDTLDFNFDNVLPNQSFPHSVKTTTHSWVSG.

Disordered stretches follow at residues 1–62 (MAEA…PSAS) and 122–165 (GCLH…SRRN). Thr24 is subject to Phosphothreonine; by PKB/AKT1 or PKB/AKT2 and SGK1. The span at 33–62 (SQSNSATSSPAPSGGAAANPDAAAGLPSAS) shows a compositional bias: low complexity. The span at 126 to 146 (PAPPQQPPPPGPLSQHPPVPP) shows a compositional bias: pro residues. Residues 167–261 (WGNLSYADLI…KSGKSPRRRA (95 aa)) constitute a DNA-binding region (fork-head). 2 DNA-binding regions span residues 218-225 (NSIRHNLS) and 241-244 (SSWW). Residue Ser219 is modified to Phosphoserine; by STK4/MST1. Phosphoserine is present on residues Ser225, Ser241, and Ser242. A disordered region spans residues 241–342 (SSWWMLNPEG…GRLSPIMTEQ (102 aa)). 2 positions are modified to N6-acetyllysine: Lys252 and Lys255. Phosphoserine; by CDK1 is present on Ser256. 2 positions are modified to omega-N-methylarginine; by PRMT1: Arg258 and Arg260. The Nuclear localization signal signature appears at 258 to 260 (RRR). Ser263 bears the Phosphoserine; by PKB/AKT1 and SGK1 mark. An N6-acetyllysine mark is found at Lys269, Lys272, and Lys281. Residues 271-282 (AKSRGRAAKKKA) show a composition bias toward basic residues. The segment at 290 to 570 (GAGDSPGSQF…RLTQEKTALQ (281 aa)) is sufficient for interaction with NLK. Phosphoserine occurs at positions 294 and 305. Polar residues predominate over residues 316–333 (NWSTFRPRTSSNASTISG). At Ser326 the chain carries Phosphoserine; by PKB/AKT1. Position 329 is a phosphoserine; by CK1 and SGK1 (Ser329). A Phosphoserine; by CK1 modification is found at Ser332. Phosphoserine; by DYRK1A is present on Ser336. Thr340 carries the post-translational modification Phosphothreonine. Residues 370–466 (SEISNPENME…GGMAQYNCAA (97 aa)) are required for interaction with RUNX2. Position 430 is an N6-acetyllysine (Lys430). The Required for interaction with SIRT1 signature appears at 469 to 473 (LKELL).

Interacts with LRPPRC. Interacts with RUNX2; the interaction inhibits RUNX2 transcriptional activity and mediates the IGF1/insulin-dependent BGLAP expression in osteoblasts Interacts with PPP2R1A; the interaction regulates the dephosphorylation of FOXO1 at Thr-24 and Ser-263 leading to its nuclear import. Interacts with NLK. Interacts with SIRT1; the interaction results in the deacetylation of FOXO1 leading to activation of FOXO1-mediated transcription of genes involved in DNA repair and stress resistance. Binds to CDK1. Interacts with the 14-3-3 proteins, YWHAG and YWHAZ; the interactions require insulin-stimulated phosphorylation on Thr-24, promote nuclear exit and loss of transcriptional activity. Interacts with SKP2; the interaction ubiquitinates FOXO1 leading to its proteasomal degradation. The interaction requires the presence of KRIT1. Interacts (via the C-terminal half) with ATF4 (via its DNA binding domain); the interaction occurs in osteoblasts, regulates glucose homeostasis via suppression of beta-cell proliferation and subsequent decrease in insulin production. Interacts with PRMT1; the interaction methylates FOXO1, prevents PKB/AKT1 phosphorylation and retains FOXO1 in the nucleus. Interacts with EP300 and CREBBP; the interactions acetylate FOXO1. Interacts with SIRT2; the interaction is disrupted in response to oxidative stress or serum deprivation, leading to increased level of acetylated FOXO1, which promotes stress-induced autophagy by stimulating E1-like activating enzyme ATG7. Interacts (acetylated form) with ATG7; the interaction is increased in response to oxidative stress or serum deprivation and promotes the autophagic process leading to cell death. Interacts (acetylated form) with PPARG. Interacts with XBP1; this interaction is direct and leads to FOXO1 ubiquitination and degradation via the proteasome pathway. Interacts (via the Fork-head domain) with CEBPA; the interaction increases when FOXO1 is deacetylated. Interacts with WDFY2. Forms a complex with WDFY2 and AKT1. Interacts with CRY1. Interacts with PPIA/CYPA; the interaction promotes FOXO1 dephosphorylation, nuclear accumulation and transcriptional activity. Interacts with TOX4; FOXO1 is required for full induction of TOX4-dependent activity and the interaction is inhibited by insulin. Interacts (when phosphorylated on Ser-263) with STUB1/CHIP. In terms of processing, phosphorylation by NLK promotes nuclear export and inhibits the transcriptional activity. In response to growth factors, phosphorylation on Thr-24, Ser-263 and Ser-326 by PKB/AKT1 promotes nuclear export and inactivation of transactivational activity. Phosphorylation on Thr-24 is required for binding 14-3-3 proteins. Phosphorylation of Ser-263 decreases DNA-binding activity and promotes the phosphorylation of Thr-24 and Ser-326, permitting phosphorylation of Ser-329 and Ser-332, probably by CDK1, leading to nuclear exclusion and loss of function. Stress signals, such as response to oxygen or nitric oxide, attenuate the PKB/AKT1-mediated phosphorylation leading to nuclear retention. Phosphorylation of Ser-336 is independent of IGF1 and leads to reduced function. Dephosphorylated on Thr-24 and Ser-263 by PP2A in beta-cells under oxidative stress leading to nuclear retention. Phosphorylation of Ser-256 by CDK1 disrupts binding of 14-3-3 proteins leading to nuclear accumulation and has no effect on DNA binding nor transcriptional activity. Phosphorylation by STK4/MST1 on Ser-219, upon oxidative stress, inhibits binding to 14-3-3 proteins and nuclear export. PPIA/CYPA promotes its dephosphorylation on Ser-263. Post-translationally, ubiquitinated by SKP2. Ubiquitination leads to proteasomal degradation. Ubiquitinated by STUB1/CHIP; when Ser-263 is phosphorylated. Methylation inhibits AKT1-mediated phosphorylation at Ser-263 and is increased by oxidative stress. In terms of processing, acetylated. Acetylation at Lys-269 and Lys-281 are necessary for autophagic cell death induction. Deacetylated by SIRT2 in response to oxidative stress or serum deprivation, thereby negatively regulating FOXO1-mediated autophagic cell death. Once in the nucleus, acetylated by CREBBP/EP300. Acetylation diminishes the interaction with target DNA and attenuates the transcriptional activity. It increases the phosphorylation at Ser-263. Deacetylation by SIRT1 results in reactivation of the transcriptional activity. Oxidative stress by hydrogen peroxide treatment appears to promote deacetylation and uncoupling of insulin-induced phosphorylation. By contrast, resveratrol acts independently of acetylation. Acetylated at Lys-430, promoting its localization to the nucleus and transcription factor activity. Deacetylation at Lys-430 by SIRT6, promotes its translocation into the cytoplasm, preventing its transcription factor activity. Deacetylation and subsequent inhibition by SIRT6 has different effects depending on cell types: it inhibits gluconeogenesis in hepatocytes, promotes glucose sensing in pancreatic beta-cells and regulates lipid catabolism in brown adipocytes. Highly in subcutaneous adipose and visceral adipose tissues. Levels higher in piglets than in adults. Also expressed at lower levels in liver and muscle.

The protein resides in the cytoplasm. It is found in the nucleus. In terms of biological role, transcription factor that is the main target of insulin signaling and regulates metabolic homeostasis in response to oxidative stress. Binds to the insulin response element (IRE) with consensus sequence 5'-TT[G/A]TTTTG-3' and the related Daf-16 family binding element (DBE) with consensus sequence 5'-TT[G/A]TTTAC-3'. Activity suppressed by insulin. Main regulator of redox balance and osteoblast numbers and controls bone mass. Orchestrates the endocrine function of the skeleton in regulating glucose metabolism. Also acts as a key regulator of chondrogenic commitment of skeletal progenitor cells in response to lipid availability: when lipids levels are low, translocates to the nucleus and promotes expression of SOX9, which induces chondrogenic commitment and suppresses fatty acid oxidation. Acts synergistically with ATF4 to suppress osteocalcin/BGLAP activity, increasing glucose levels and triggering glucose intolerance and insulin insensitivity. Also suppresses the transcriptional activity of RUNX2, an upstream activator of osteocalcin/BGLAP. Acts as an inhibitor of glucose sensing in pancreatic beta cells by acting as a transcription repressor and suppressing expression of PDX1. In hepatocytes, promotes gluconeogenesis by acting together with PPARGC1A and CEBPA to activate the expression of genes such as IGFBP1, G6PC1 and PCK1. Also promotes gluconeogenesis by directly promoting expression of PPARGC1A and G6PC1. Important regulator of cell death acting downstream of CDK1, PKB/AKT1 and STK4/MST1. Promotes neural cell death. Mediates insulin action on adipose tissue. Regulates the expression of adipogenic genes such as PPARG during preadipocyte differentiation and, adipocyte size and adipose tissue-specific gene expression in response to excessive calorie intake. Regulates the transcriptional activity of GADD45A and repair of nitric oxide-damaged DNA in beta-cells. Required for the autophagic cell death induction in response to starvation or oxidative stress in a transcription-independent manner. Mediates the function of MLIP in cardiomyocytes hypertrophy and cardiac remodeling. Positive regulator of apoptosis in cardiac smooth muscle cells as a result of its transcriptional activation of pro-apoptotic genes. Regulates endothelial cell (EC) viability and apoptosis in a PPIA/CYPA-dependent manner via transcription of CCL2 and BCL2L11 which are involved in EC chemotaxis and apoptosis. This Sus scrofa (Pig) protein is Forkhead box protein O1 (FOXO1).